We begin with the raw amino-acid sequence, 180 residues long: Large ribosomal subunit protein bL19 (180 aa).

Belongs to the bacterial ribosomal protein bL19 family.

In terms of biological role, this protein is located at the 30S-50S ribosomal subunit interface and may play a role in the structure and function of the aminoacyl-tRNA binding site. The chain is Large ribosomal subunit protein bL19 from Allorhizobium ampelinum (strain ATCC BAA-846 / DSM 112012 / S4) (Agrobacterium vitis (strain S4)).